Reading from the N-terminus, the 155-residue chain is 6,7-dimethyl-8-ribityllumazine synthase (155 aa).

5-amino-6-(D-ribitylamino)uracil is bound by residues F23, 57–59 (AFE), and 81–83 (AVI). 86–87 (ST) is a binding site for (2S)-2-hydroxy-3-oxobutyl phosphate. H89 (proton donor) is an active-site residue. 5-amino-6-(D-ribitylamino)uracil is bound at residue F114. Residue R128 coordinates (2S)-2-hydroxy-3-oxobutyl phosphate.

The protein belongs to the DMRL synthase family.

The catalysed reaction is (2S)-2-hydroxy-3-oxobutyl phosphate + 5-amino-6-(D-ribitylamino)uracil = 6,7-dimethyl-8-(1-D-ribityl)lumazine + phosphate + 2 H2O + H(+). It participates in cofactor biosynthesis; riboflavin biosynthesis; riboflavin from 2-hydroxy-3-oxobutyl phosphate and 5-amino-6-(D-ribitylamino)uracil: step 1/2. Catalyzes the formation of 6,7-dimethyl-8-ribityllumazine by condensation of 5-amino-6-(D-ribitylamino)uracil with 3,4-dihydroxy-2-butanone 4-phosphate. This is the penultimate step in the biosynthesis of riboflavin. The chain is 6,7-dimethyl-8-ribityllumazine synthase from Pelobacter propionicus (strain DSM 2379 / NBRC 103807 / OttBd1).